The sequence spans 124 residues: Large ribosomal subunit protein bL12 (124 aa).

It belongs to the bacterial ribosomal protein bL12 family. Homodimer. Part of the ribosomal stalk of the 50S ribosomal subunit. Forms a multimeric L10(L12)X complex, where L10 forms an elongated spine to which 2 to 4 L12 dimers bind in a sequential fashion. Binds GTP-bound translation factors.

Its function is as follows. Forms part of the ribosomal stalk which helps the ribosome interact with GTP-bound translation factors. Is thus essential for accurate translation. The protein is Large ribosomal subunit protein bL12 of Rickettsia akari (strain Hartford).